A 141-amino-acid chain; its full sequence is ATP synthase epsilon chain (141 aa).

It belongs to the ATPase epsilon chain family. In terms of assembly, F-type ATPases have 2 components, CF(1) - the catalytic core - and CF(0) - the membrane proton channel. CF(1) has five subunits: alpha(3), beta(3), gamma(1), delta(1), epsilon(1). CF(0) has three main subunits: a, b and c.

The protein localises to the cell inner membrane. Functionally, produces ATP from ADP in the presence of a proton gradient across the membrane. The chain is ATP synthase epsilon chain from Pseudomonas fluorescens (strain Pf0-1).